The chain runs to 392 residues: S-adenosylmethionine synthase (392 aa).

His20 serves as a coordination point for ATP. Position 22 (Asp22) interacts with Mg(2+). A K(+)-binding site is contributed by Glu48. L-methionine-binding residues include Glu61 and Gln106. The tract at residues Gln106–Lys116 is flexible loop. ATP contacts are provided by residues Asp171–Lys173, Asp248, Arg254–Lys255, Ala271, and Lys275. An L-methionine-binding site is contributed by Asp248. Position 279 (Lys279) interacts with L-methionine.

The protein belongs to the AdoMet synthase family. Homotetramer; dimer of dimers. The cofactor is Mg(2+). K(+) serves as cofactor.

The protein resides in the cytoplasm. The enzyme catalyses L-methionine + ATP + H2O = S-adenosyl-L-methionine + phosphate + diphosphate. The protein operates within amino-acid biosynthesis; S-adenosyl-L-methionine biosynthesis; S-adenosyl-L-methionine from L-methionine: step 1/1. Functionally, catalyzes the formation of S-adenosylmethionine (AdoMet) from methionine and ATP. The overall synthetic reaction is composed of two sequential steps, AdoMet formation and the subsequent tripolyphosphate hydrolysis which occurs prior to release of AdoMet from the enzyme. The protein is S-adenosylmethionine synthase of Borreliella burgdorferi (strain ATCC 35210 / DSM 4680 / CIP 102532 / B31) (Borrelia burgdorferi).